Here is a 106-residue protein sequence, read N- to C-terminus: ATP-dependent Clp protease adapter protein ClpS (106 aa).

It belongs to the ClpS family. As to quaternary structure, binds to the N-terminal domain of the chaperone ClpA.

Involved in the modulation of the specificity of the ClpAP-mediated ATP-dependent protein degradation. The polypeptide is ATP-dependent Clp protease adapter protein ClpS (Enterobacter sp. (strain 638)).